A 274-amino-acid polypeptide reads, in one-letter code: MDRYCVFGNPIGHSKSPLIHRLFAEQTGEALVYDAQLAPLDDFPGFARRFFEQGKGANVTVPFKEEAYRLVDELSERATRAGAVNTLIRLADGRLRGDNTDGAGLLRDLTANAGVELRGKRVLLLGAGGAVRGVLEPFLGECPAELLIANRTARKAVDLAERFADLGAVHGCGFAEVEGPFDLIVNGTSASLAGDVPPLAQSVIEPGRTVCYDMMYAKEPTAFNRWAAERGAARTLDGLGMLVEQAAEAFFLWRGVRPASAPVLETLRRQLATV.

Residues 14 to 16 (SKS) and Thr60 contribute to the shikimate site. Lys64 functions as the Proton acceptor in the catalytic mechanism. Glu76 provides a ligand contact to NADP(+). Shikimate-binding residues include Asn85 and Asp101. Residues 126-130 (GAGGA), 150-155 (NRTARK), and Met214 contribute to the NADP(+) site. Residue Tyr216 coordinates shikimate. Position 238 (Gly238) interacts with NADP(+).

Belongs to the shikimate dehydrogenase family. Homodimer.

The catalysed reaction is shikimate + NADP(+) = 3-dehydroshikimate + NADPH + H(+). The protein operates within metabolic intermediate biosynthesis; chorismate biosynthesis; chorismate from D-erythrose 4-phosphate and phosphoenolpyruvate: step 4/7. In terms of biological role, involved in the biosynthesis of the chorismate, which leads to the biosynthesis of aromatic amino acids. Catalyzes the reversible NADPH linked reduction of 3-dehydroshikimate (DHSA) to yield shikimate (SA). This is Shikimate dehydrogenase (NADP(+)) from Pseudomonas aeruginosa (strain ATCC 15692 / DSM 22644 / CIP 104116 / JCM 14847 / LMG 12228 / 1C / PRS 101 / PAO1).